A 386-amino-acid polypeptide reads, in one-letter code: Patatin-2-Kuras 2 (386 aa).

Residues 1–23 form the signal peptide; the sequence is MATTKSFLILFFMILATTSSTCA. The PNPLA domain occupies 32-229; the sequence is LSIDGGGIKG…TVGDPALLSL (198 aa). Positions 36–41 match the GXGXXG motif; it reads GGGIKG. The GXSXG motif lies at 75 to 79; the sequence is GTSTG. Serine 77 (nucleophile) is an active-site residue. An N-linked (GlcNAc...) asparagine glycan is attached at asparagine 115. The active-site Proton acceptor is the aspartate 215. The short motif at 215–217 is the DGA/G element; sequence DGA. Residues 321-384 are a coiled coil; sequence ENALTGTTTE…DRKKLRANKA (64 aa).

Belongs to the patatin family.

The protein localises to the vacuole. Probable lipolytic acyl hydrolase (LAH), an activity which is thought to be involved in the response of tubers to pathogens. The polypeptide is Patatin-2-Kuras 2 (pat2-k2) (Solanum tuberosum (Potato)).